The primary structure comprises 472 residues: Adenosylhomocysteinase (472 aa).

Substrate-binding residues include Thr-62, Asp-137, and Glu-197. 198 to 200 contributes to the NAD(+) binding site; the sequence is TTT. Substrate contacts are provided by Lys-227 and Asp-231. Residues Asn-232, 261–266, Glu-284, Asn-319, 340–342, and Asn-385 contribute to the NAD(+) site; these read GYGDVG and IGH.

Belongs to the adenosylhomocysteinase family. It depends on NAD(+) as a cofactor.

The protein localises to the cytoplasm. The catalysed reaction is S-adenosyl-L-homocysteine + H2O = L-homocysteine + adenosine. It functions in the pathway amino-acid biosynthesis; L-homocysteine biosynthesis; L-homocysteine from S-adenosyl-L-homocysteine: step 1/1. May play a key role in the regulation of the intracellular concentration of adenosylhomocysteine. The polypeptide is Adenosylhomocysteinase (Bordetella petrii (strain ATCC BAA-461 / DSM 12804 / CCUG 43448)).